We begin with the raw amino-acid sequence, 24 residues long: LLKELWTKIKGAGKAVLGKIKGLL.

Leucine 24 bears the Leucine amide mark.

In terms of tissue distribution, expressed by the venom gland.

It localises to the secreted. Functionally, has a broad spectrum of activity against both Gram-positive and Gram-negative bacteria. Is inactive against yeast, erythrocytes, and insects. The chain is M-poneritoxin-Ng2b from Neoponera goeldii (Ponerine ant).